Reading from the N-terminus, the 201-residue chain is Casparian strip membrane protein 7 (201 aa).

Residues 1–11 show a composition bias toward acidic residues; sequence MEAGEEIEDGE. The segment at 1 to 26 is disordered; it reads MEAGEEIEDGEPSTPTYKAHHPPPHL. The Cytoplasmic portion of the chain corresponds to 1–34; that stretch reads MEAGEEIEDGEPSTPTYKAHHPPPHLPPPMRSSG. The helical transmembrane segment at 35–55 threads the bilayer; sequence VSLVLSVADLVLRFVAIGGTA. Residues 56–86 are Extracellular-facing; it reads GSAIAMATTSETLPFAAPFVRFRAEYSDLPT. Residues 87-107 form a helical membrane-spanning segment; it reads LMFFVVASSVVCAYLVLSLPA. Topologically, residues 108–128 are cytoplasmic; that stretch reads SVVHVVRPGARSSRAILAFLD. The chain crosses the membrane as a helical span at residues 129–149; the sequence is TVMLALLTASASAAAAIVYLA. Residues 150–171 lie on the Extracellular side of the membrane; sequence HRGSARANWLGICQQFTSFCQR. The helical transmembrane segment at 172–192 threads the bilayer; the sequence is ITASLVGSFAAAVVLVALVFL. Residues 193–201 are Cytoplasmic-facing; sequence SALSLARRA.

This sequence belongs to the Casparian strip membrane proteins (CASP) family. In terms of assembly, homodimer and heterodimers.

The protein resides in the cell membrane. Functionally, regulates membrane-cell wall junctions and localized cell wall deposition. Required for establishment of the Casparian strip membrane domain (CSD) and the subsequent formation of Casparian strips, a cell wall modification of the root endodermis that determines an apoplastic barrier between the intraorganismal apoplasm and the extraorganismal apoplasm and prevents lateral diffusion. This Oryza sativa subsp. japonica (Rice) protein is Casparian strip membrane protein 7.